The sequence spans 364 residues: Dihydroorotate dehydrogenase (quinone) (364 aa).

Residues 61 to 65 (AGFDK) and threonine 85 each bind FMN. Lysine 65 is a substrate binding site. 110-114 (NRMGF) contacts substrate. Asparagine 139 and asparagine 170 together coordinate FMN. Substrate is bound at residue asparagine 170. The active-site Nucleophile is serine 173. Asparagine 175 provides a ligand contact to substrate. 2 residues coordinate FMN: lysine 214 and alanine 242. 243–244 (NT) contacts substrate. Residues glycine 266, glycine 295, and 316–317 (YS) contribute to the FMN site.

This sequence belongs to the dihydroorotate dehydrogenase family. Type 2 subfamily. As to quaternary structure, monomer. Requires FMN as cofactor.

It localises to the cell membrane. The enzyme catalyses (S)-dihydroorotate + a quinone = orotate + a quinol. Its pathway is pyrimidine metabolism; UMP biosynthesis via de novo pathway; orotate from (S)-dihydroorotate (quinone route): step 1/1. Functionally, catalyzes the conversion of dihydroorotate to orotate with quinone as electron acceptor. The protein is Dihydroorotate dehydrogenase (quinone) of Rhodopseudomonas palustris (strain BisA53).